The primary structure comprises 490 residues: MSLSSLTLDSNPRFAVGGPYHRRYPPLHHPRSFVSCSAKRPAVSASLSVAADSAATESLGRIGSLSQVSGVLGCQWGDEGKGKLVDILAQHFDIVARCQGGANAGHTIYNSEGKKFALHLVPSGILNEDTTCVIGNGVVVHLPGLFKEIDGLESNGVSCKGRILVSDRAHLLFDFHQEVDGLRESELAKSFIGTTKRGIGPAYSSKVIRNGIRVGDLRHMDTLPQKLDLLLSDAAARFQGFKYTPEMLREEVEAYKRYADRLEPYITDTVHFINDSISQKKKVLVEGGQATMLDIDFGTYPFVTSSSPSAGGICTGLGIAPSVVGDLIGVVKAYTTRVGSGPFPTENLGTGGDLLRLAGQEFGTTTGRPRRCGWLDIVALKFSCQINGFASLNLTKLDVLSDLNEIQLGVAYKRSDGTPVKSFPGDLRLLEELHVEYEVLPGWKSDISSVRNYSDLPKAAQQYVERIEELVGVPIHYIGIGPGRDALIYK.

The transit peptide at M1–A45 directs the protein to the chloroplast. Residue S46 is modified to N-acetylserine. GTP-binding positions include G77–K83 and G105–T107. Catalysis depends on D78, which acts as the Proton acceptor. Residues D78 and G105 each coordinate Mg(2+). Residues D78–K81, N103–H106, T195, R209, Q289, T304, and R368 contribute to the IMP site. H106 acts as the Proton donor in catalysis. Residue T364 to R370 coordinates substrate. GTP-binding positions include R370, K396–D398, and G479–G481.

The protein belongs to the adenylosuccinate synthetase family. As to quaternary structure, homodimer. The cofactor is Mg(2+).

The protein resides in the plastid. Its subcellular location is the chloroplast. It carries out the reaction IMP + L-aspartate + GTP = N(6)-(1,2-dicarboxyethyl)-AMP + GDP + phosphate + 2 H(+). Its pathway is purine metabolism; AMP biosynthesis via de novo pathway; AMP from IMP: step 1/2. Plays an important role in the de novo pathway and in the salvage pathway of purine nucleotide biosynthesis. Catalyzes the first committed step in the biosynthesis of AMP from IMP. The protein is Adenylosuccinate synthetase, chloroplastic of Arabidopsis thaliana (Mouse-ear cress).